A 224-amino-acid polypeptide reads, in one-letter code: Peptidyl-prolyl cis-trans isomerase FKBP3 (224 aa).

Ala-2 is modified (N-acetylalanine). Ser-36 carries the post-translational modification Phosphoserine. Residues 89–102 (KLNEDKPKETKSEE) show a composition bias toward basic and acidic residues. The interval 89 to 111 (KLNEDKPKETKSEETLDEGPPKY) is disordered. Lys-99 is subject to N6-acetyllysine. One can recognise a PPIase FKBP-type domain in the interval 128 to 224 (GDVVHCWYTG…TFEVELVDID (97 aa)). Ser-152 bears the Phosphoserine mark. An N6-acetyllysine modification is found at Lys-170.

It belongs to the FKBP-type PPIase family.

The protein localises to the nucleus. It carries out the reaction [protein]-peptidylproline (omega=180) = [protein]-peptidylproline (omega=0). With respect to regulation, inhibited preferentially by rapamycin over FK506. Its function is as follows. FK506- and rapamycin-binding proteins (FKBPs) constitute a family of receptors for the two immunosuppressants which inhibit T-cell proliferation by arresting two distinct cytoplasmic signal transmission pathways. PPIases accelerate the folding of proteins. In Homo sapiens (Human), this protein is Peptidyl-prolyl cis-trans isomerase FKBP3 (FKBP3).